Here is a 365-residue protein sequence, read N- to C-terminus: MLLSLVLHTYSMRYLLPSVLLLGSAPTYLLAWTLWRVLSALMPARLYQRVDDRLYCVYQNMVLFFFENYTGVQILLYGDLPKNKENVIYLANHQSTVDWIVADMLAARQDALGHVRYVLKDKLKWLPLYGFYFAQHGGIYVKRSAKFNDKEMRSKLQSYVNAGTPMYLVIFPEGTRYNATYTKLLSASQAFAAQRGLAVLKHVLTPRIKATHVAFDSMKSHLDAIYDVTVVYEGNEKGSGKYSNPPSMTEFLCKQCPKLHIHFDRIDRNEVPEEQEHMKKWLHERFEIKDRLLIEFYDSPDPERRNKFPGKSVHSRLSVKKTLPSVLILGSLTAVMLMTESGRKLYMGTWLYGTLLGCLWFVIKA.

A helical membrane pass occupies residues 15–35 (LLPSVLLLGSAPTYLLAWTLW). The short motif at 93–98 (HQSTVD) is the HXXXXD motif element. The helical transmembrane segment at 345 to 365 (LYMGTWLYGTLLGCLWFVIKA) threads the bilayer.

Belongs to the 1-acyl-sn-glycerol-3-phosphate acyltransferase family. As to expression, widely expressed.

It is found in the endoplasmic reticulum membrane. Its subcellular location is the nucleus envelope. It localises to the mitochondrion. The catalysed reaction is a 1-acyl-sn-glycero-3-phosphate + an acyl-CoA = a 1,2-diacyl-sn-glycero-3-phosphate + CoA. It catalyses the reaction 1-(9Z-octadecenoyl)-sn-glycero-3-phosphate + tetradecanoyl-CoA = 1-(9Z)-octadecenoyl-2-tetradecanoyl-sn-glycero-3-phosphate + CoA. It carries out the reaction pentadecanoyl-CoA + 1-(9Z-octadecenoyl)-sn-glycero-3-phosphate = 1-(9Z)-octadecenoyl-2-pentadecanoyl-sn-glycero-3-phosphate + CoA. The enzyme catalyses 1-(9Z-octadecenoyl)-sn-glycero-3-phosphate + octadecanoyl-CoA = 1-(9Z-octadecenoyl)-2-octadecanoyl-sn-glycero-3-phosphate + CoA. The catalysed reaction is nonadecanoyl-CoA + 1-(9Z-octadecenoyl)-sn-glycero-3-phosphate = 1-(9Z)-octadecenoyl-2-nonadecanoyl-sn-glycero-3-phosphate + CoA. It catalyses the reaction 1-(9Z-octadecenoyl)-sn-glycero-3-phosphoethanolamine + (9Z)-octadecenoyl-CoA = 1,2-di-(9Z-octadecenoyl)-sn-glycero-3-phosphoethanolamine + CoA. It carries out the reaction 1-(9Z-octadecenoyl)-sn-glycero-3-phosphocholine + (9Z)-octadecenoyl-CoA = 1,2-di-(9Z-octadecenoyl)-sn-glycero-3-phosphocholine + CoA. The enzyme catalyses 1-(9Z-octadecenoyl)-sn-glycero-3-phospho-(1D-myo-inositol) + (5Z,8Z,11Z,14Z)-eicosatetraenoyl-CoA = 1-(9Z-octadecenoyl)-2-(5Z,8Z,11Z,14Z-eicosatetraenoyl)-sn-glycero-3-phospho-1D-myo-inositol + CoA. The catalysed reaction is 1-(9Z-octadecenoyl)-sn-glycero-3-phospho-L-serine + (9Z)-octadecenoyl-CoA = 1,2-di-(9Z)-octadecenoyl-sn-glycero-3-phospho-L-serine + CoA. It catalyses the reaction 1-(9Z-octadecenoyl)-sn-glycero-3-phospho-L-serine + (5Z,8Z,11Z,14Z)-eicosatetraenoyl-CoA = 1-(9Z-octadecenoyl)-2-(5Z,8Z,11Z,14Z-eicosatetraenoyl)-sn-glycero-3-phospho-L-serine + CoA. It carries out the reaction 1-hexadecanoyl-sn-glycero-3-phosphate + (9Z)-octadecenoyl-CoA = 1-hexadecanoyl-2-(9Z-octadecenoyl)-sn-glycero-3-phosphate + CoA. The enzyme catalyses 1-heptadecanoyl-sn-glycero-3-phosphate + (9Z)-octadecenoyl-CoA = 1-heptadecanoyl-2-(9Z)-octadecenoyl-sn-glycero-3-phosphate + CoA. The catalysed reaction is 1-(5Z,8Z,11Z,14Z-eicosatetraenoyl)-sn-glycero-3-phosphate + (9Z)-octadecenoyl-CoA = 1-(5Z,8Z,11Z,14Z)-eicosatetraenoyl-2-(9Z)-octadecenoyl-sn-glycero-3-phosphate + CoA. It catalyses the reaction 1-octadecanoyl-sn-glycero-3-phosphate + (9Z)-octadecenoyl-CoA = 1-octadecanoyl-2-(9Z-octadecenoyl)-sn-glycero-3-phosphate + CoA. It carries out the reaction 1-(9Z-octadecenoyl)-sn-glycero-3-phosphate + (5Z,8Z,11Z,14Z)-eicosatetraenoyl-CoA = 1-(9Z)-octadecenoyl-2-(5Z,8Z,11Z,14Z)-eicosatetraenoyl-sn-glycero-3-phosphate + CoA. The enzyme catalyses heptadecanoyl-CoA + 1-(9Z-octadecenoyl)-sn-glycero-3-phosphate = 1-(9Z)-octadecenoyl-2-heptadecanoyl-sn-glycero-3-phosphate + CoA. The catalysed reaction is 1-(9Z-octadecenoyl)-sn-glycero-3-phosphocholine + (5Z,8Z,11Z,14Z)-eicosatetraenoyl-CoA = 1-(9Z)-octadecenoyl-2-(5Z,8Z,11Z,14Z)-icosatetraenoyl-sn-glycero-3-phosphocholine + CoA. It catalyses the reaction 1-(9Z-octadecenoyl)-sn-glycero-3-phosphate + (9Z)-octadecenoyl-CoA = 1,2-di-(9Z-octadecenoyl)-sn-glycero-3-phosphate + CoA. It carries out the reaction 1-(9Z-octadecenoyl)-sn-glycero-3-phosphate + hexadecanoyl-CoA = 1-hexadecanoyl-2-(9Z-octadecenoyl)-sn-glycero-3-phosphate + CoA. Its pathway is phospholipid metabolism; CDP-diacylglycerol biosynthesis; CDP-diacylglycerol from sn-glycerol 3-phosphate: step 2/3. Converts 1-acyl-sn-glycerol-3-phosphate (lysophosphatidic acid or LPA) into 1,2-diacyl-sn-glycerol-3-phosphate (phosphatidic acid or PA) by incorporating an acyl moiety at the sn-2 position of the glycerol backbone. Acts on LPA containing saturated or unsaturated fatty acids C15:0-C20:4 at the sn-1 position using C18:1-CoA as the acyl donor. Also acts on lysophosphatidylethanolamine using oleoyl-CoA, but not arachidonoyl-CoA, and lysophosphatidylinositol using arachidonoyl-CoA, but not oleoyl-CoA. Activity toward lysophosphatidylglycerol not detectable. The polypeptide is 1-acyl-sn-glycerol-3-phosphate acyltransferase epsilon (Agpat5) (Mus musculus (Mouse)).